Here is a 451-residue protein sequence, read N- to C-terminus: Bacteriochlorophyllide d C-8(2)-methyltransferase (451 aa).

One can recognise a B12-binding domain in the interval 1–118; the sequence is MDDDSNQKPL…DDVANNRLKE (118 aa). The 230-residue stretch at 148-377 folds into the Radical SAM core domain; the sequence is VDGTKSIPIY…ALHLVIKSDR (230 aa). 3 residues coordinate [4Fe-4S] cluster: cysteine 162, cysteine 166, and cysteine 169.

The protein belongs to the radical SAM superfamily. The cofactor is [4Fe-4S] cluster.

The protein resides in the cytoplasm. The catalysed reaction is 8,12-diethyl-3-vinylbacteriochlorophyllide d + S-adenosyl-L-methionine = 12-ethyl-8-propyl-3-vinylbacteriochlorophyllide d + S-adenosyl-L-homocysteine + H(+). The enzyme catalyses 12-ethyl-8-propyl-3-vinylbacteriochlorophyllide d + S-adenosyl-L-methionine = 12-ethyl-8-isobutyl-3-vinylbacteriochlorophyllide d + S-adenosyl-L-homocysteine + H(+). Its pathway is porphyrin-containing compound metabolism; bacteriochlorophyll biosynthesis (light-independent). Its function is as follows. Involved in the biosynthesis of the major light-harvesting pigment bacteriochlorophyll c (BChlc), which confers a significant competitive advantage to green sulfur bacteria living at limiting red and near-infrared light intensities. BchQ is a methyltransferase that adds two consecutive methyl groups to the ethyl carbon at the C-8(2) position of 8,12-diethyl-3-vinylbacteriochlorophyllide d to yield 12-ethyl-8-isobutyl-3-vinylbacteriochlorophyllide d. This chain is Bacteriochlorophyllide d C-8(2)-methyltransferase, found in Chlorobaculum tepidum (strain ATCC 49652 / DSM 12025 / NBRC 103806 / TLS) (Chlorobium tepidum).